The primary structure comprises 130 residues: Large ribosomal subunit protein eL22 (130 aa).

Positions 1 to 21 (MPGKTAQKGGRPSGKGKKKKQ) are disordered. Positions 17–20 (KKKK) match the Nuclear localization signal motif.

It belongs to the eukaryotic ribosomal protein eL22 family.

The polypeptide is Large ribosomal subunit protein eL22 (RPL22) (Tripneustes gratilla (Hawaian sea urchin)).